The sequence spans 429 residues: C4-dicarboxylate transport protein (429 aa).

8 helical membrane passes run 9–29 (VLYV…HYYP), 45–65 (LIKM…IAGM), 79–99 (LLYF…ATHI), 149–169 (GEIL…AHLG), 185–205 (VLFG…FGAM), 223–243 (LIGT…GAIA), 308–328 (IYMT…LTWM), and 356–376 (AATL…ILGI).

Belongs to the dicarboxylate/amino acid:cation symporter (DAACS) (TC 2.A.23) family.

The protein resides in the cell inner membrane. In terms of biological role, responsible for the transport of dicarboxylates such as succinate, fumarate, and malate from the periplasm across the membrane. In Burkholderia multivorans (strain ATCC 17616 / 249), this protein is C4-dicarboxylate transport protein.